The sequence spans 362 residues: tRNA-specific 2-thiouridylase MnmA 1 (362 aa).

Residues 29 to 36 (AMSGGVDS) and Met-55 each bind ATP. Residue Cys-109 is the Nucleophile of the active site. Residues Cys-109 and Cys-201 are joined by a disulfide bond. Gly-133 lines the ATP pocket. The tract at residues 151-153 (KDQ) is interaction with tRNA. Cys-201 (cysteine persulfide intermediate) is an active-site residue.

It belongs to the MnmA/TRMU family.

The protein resides in the cytoplasm. It carries out the reaction S-sulfanyl-L-cysteinyl-[protein] + uridine(34) in tRNA + AH2 + ATP = 2-thiouridine(34) in tRNA + L-cysteinyl-[protein] + A + AMP + diphosphate + H(+). In terms of biological role, catalyzes the 2-thiolation of uridine at the wobble position (U34) of tRNA, leading to the formation of s(2)U34. The sequence is that of tRNA-specific 2-thiouridylase MnmA 1 from Fusobacterium nucleatum subsp. nucleatum (strain ATCC 25586 / DSM 15643 / BCRC 10681 / CIP 101130 / JCM 8532 / KCTC 2640 / LMG 13131 / VPI 4355).